Consider the following 481-residue polypeptide: Beta-amyrin 16-beta-monooxygenase (481 aa).

A helical transmembrane segment spans residues 4–24 (LFIIISLVIVILTTIFILSNL). Cys-428 lines the heme pocket.

It belongs to the cytochrome P450 family. Heme is required as a cofactor. Highly expressed in roots. Expressed at very low levels in leaves and petals.

The protein resides in the membrane. The catalysed reaction is beta-amyrin + reduced [NADPH--hemoprotein reductase] + O2 = maniladiol + oxidized [NADPH--hemoprotein reductase] + H2O + H(+). It catalyses the reaction oleanolate + reduced [NADPH--hemoprotein reductase] + O2 = cochalate + oxidized [NADPH--hemoprotein reductase] + H2O + H(+). Functionally, involved in triterpenoid saponin biosynthesis in roots. Catalyzes the hydroxylation of beta-amyrin at the C-16 beta position to form maniladiol. Is also able to oxidize oleanolat to cochalate. Has weak activity catalyzing the three-step oxidation at C-28 of beta-amyrin to form oleanolate. The protein is Beta-amyrin 16-beta-monooxygenase of Platycodon grandiflorus (Balloon flower).